A 245-amino-acid chain; its full sequence is Geranylgeranylglyceryl phosphate synthase (245 aa).

Asp-22 and Ser-51 together coordinate Mg(2+). Sn-glycerol 1-phosphate is bound by residues 169–175, 200–201, and 222–223; these read YLEAGSG, GG, and GT.

It belongs to the GGGP/HepGP synthase family. Group II subfamily. Homotetramer. Homohexamer. It depends on Mg(2+) as a cofactor.

It is found in the cytoplasm. The catalysed reaction is sn-glycerol 1-phosphate + (2E,6E,10E)-geranylgeranyl diphosphate = sn-3-O-(geranylgeranyl)glycerol 1-phosphate + diphosphate. It functions in the pathway membrane lipid metabolism; glycerophospholipid metabolism. Functionally, prenyltransferase that catalyzes the transfer of the geranylgeranyl moiety of geranylgeranyl diphosphate (GGPP) to the C3 hydroxyl of sn-glycerol-1-phosphate (G1P). This reaction is the first ether-bond-formation step in the biosynthesis of archaeal membrane lipids. In Methanothermobacter thermautotrophicus (strain ATCC 29096 / DSM 1053 / JCM 10044 / NBRC 100330 / Delta H) (Methanobacterium thermoautotrophicum), this protein is Geranylgeranylglyceryl phosphate synthase.